The chain runs to 347 residues: NADH-ubiquinone oxidoreductase chain 2 (347 aa).

10 helical membrane-spanning segments follow: residues 13 to 33, 55 to 75, 96 to 116, 123 to 143, 150 to 170, 178 to 198, 201 to 221, 247 to 267, 277 to 297, and 325 to 345; these read IFAG…WVGL, AAIK…MAIL, LMIV…FWVP, PLMS…SIMY, NVSL…WGGL, ILAY…PYNP, TILN…LLNL, TLLS…WLII, ITPT…LRLI, and FLPT…FMLM.

This sequence belongs to the complex I subunit 2 family. Core subunit of respiratory chain NADH dehydrogenase (Complex I) which is composed of 45 different subunits. Interacts with TMEM242.

It localises to the mitochondrion inner membrane. It carries out the reaction a ubiquinone + NADH + 5 H(+)(in) = a ubiquinol + NAD(+) + 4 H(+)(out). Its function is as follows. Core subunit of the mitochondrial membrane respiratory chain NADH dehydrogenase (Complex I) which catalyzes electron transfer from NADH through the respiratory chain, using ubiquinone as an electron acceptor. Essential for the catalytic activity and assembly of complex I. This is NADH-ubiquinone oxidoreductase chain 2 from Gorilla gorilla gorilla (Western lowland gorilla).